A 344-amino-acid chain; its full sequence is Zinc transporter 9 (344 aa).

Residues methionine 1 to leucine 21 traverse the membrane as a helical segment. Topologically, residues proline 22 to glycine 30 are cytoplasmic. Residues alanine 31–glycine 51 form a helical membrane-spanning segment. Residues serine 52 to glutamate 72 are Extracellular-facing. A helical membrane pass occupies residues phenylalanine 73–tyrosine 93. Over glutamate 94–histidine 188 the chain is Cytoplasmic. Residues valine 189–serine 209 traverse the membrane as a helical segment. Residues leucine 210–proline 221 are Extracellular-facing. The helical transmembrane segment at leucine 222–alanine 242 threads the bilayer. Residues glutamate 243–serine 251 lie on the Cytoplasmic side of the membrane. Residues alanine 252–isoleucine 272 form a helical membrane-spanning segment. The Extracellular portion of the chain corresponds to alanine 273–aspartate 291. Residues serine 292–leucine 312 form a helical membrane-spanning segment. Residues serine 313–glutamine 323 lie on the Cytoplasmic side of the membrane. Residues valine 324–alanine 344 traverse the membrane as a helical segment.

This sequence belongs to the ZIP transporter (TC 2.A.5) family.

It is found in the cell membrane. Zinc transporter involved in zinc uptake in roots. Targeted by BZIP19 transcription factor in response to zinc-deficient conditions. In Arabidopsis thaliana (Mouse-ear cress), this protein is Zinc transporter 9 (ZIP9).